The sequence spans 277 residues: Large ribosomal subunit protein uL2c (277 aa).

Disordered stretches follow at residues 36–56 and 225–259; these read NKHS…HRGG and MNSV…GSKS.

This sequence belongs to the universal ribosomal protein uL2 family. In terms of assembly, part of the 50S ribosomal subunit.

It localises to the plastid. The protein localises to the chloroplast. This chain is Large ribosomal subunit protein uL2c (rpl2), found in Psilotum nudum (Whisk fern).